Reading from the N-terminus, the 430-residue chain is tRNA(Ile)-lysidine synthase (430 aa).

Residue 24–29 participates in ATP binding; that stretch reads SGGLDS.

It belongs to the tRNA(Ile)-lysidine synthase family.

The protein resides in the cytoplasm. The enzyme catalyses cytidine(34) in tRNA(Ile2) + L-lysine + ATP = lysidine(34) in tRNA(Ile2) + AMP + diphosphate + H(+). In terms of biological role, ligates lysine onto the cytidine present at position 34 of the AUA codon-specific tRNA(Ile) that contains the anticodon CAU, in an ATP-dependent manner. Cytidine is converted to lysidine, thus changing the amino acid specificity of the tRNA from methionine to isoleucine. The sequence is that of tRNA(Ile)-lysidine synthase from Haemophilus influenzae (strain 86-028NP).